A 207-amino-acid polypeptide reads, in one-letter code: Small ribosomal subunit protein uS5 (207 aa).

Positions 1-51 are disordered; the sequence is MTDTPTKQEITSKNDKVPGAIPGEQKKNNRNNDRKRNRRGDSKNLERDSDW. The span at 24–51 shows a compositional bias: basic and acidic residues; that stretch reads EQKKNNRNNDRKRNRRGDSKNLERDSDW. The S5 DRBM domain occupies 51–114; the sequence is WQERVVQIRR…SDGKKNLVRV (64 aa).

Belongs to the universal ribosomal protein uS5 family. Part of the 30S ribosomal subunit. Contacts proteins S4 and S8.

Its function is as follows. With S4 and S12 plays an important role in translational accuracy. Located at the back of the 30S subunit body where it stabilizes the conformation of the head with respect to the body. This chain is Small ribosomal subunit protein uS5, found in Prochlorococcus marinus (strain MIT 9312).